The chain runs to 322 residues: Methionyl-tRNA formyltransferase (322 aa).

(6S)-5,6,7,8-tetrahydrofolate is bound at residue 113-116 (SLLP).

It belongs to the Fmt family.

It catalyses the reaction L-methionyl-tRNA(fMet) + (6R)-10-formyltetrahydrofolate = N-formyl-L-methionyl-tRNA(fMet) + (6S)-5,6,7,8-tetrahydrofolate + H(+). Its function is as follows. Attaches a formyl group to the free amino group of methionyl-tRNA(fMet). The formyl group appears to play a dual role in the initiator identity of N-formylmethionyl-tRNA by promoting its recognition by IF2 and preventing the misappropriation of this tRNA by the elongation apparatus. The sequence is that of Methionyl-tRNA formyltransferase from Blochmanniella pennsylvanica (strain BPEN).